The sequence spans 227 residues: 7-cyano-7-deazaguanine synthase (227 aa).

Position 8 to 18 (8 to 18 (LSGGLDSATVL)) interacts with ATP. Zn(2+) is bound by residues C191, C201, C204, and C207.

The protein belongs to the QueC family. The cofactor is Zn(2+).

It carries out the reaction 7-carboxy-7-deazaguanine + NH4(+) + ATP = 7-cyano-7-deazaguanine + ADP + phosphate + H2O + H(+). The protein operates within purine metabolism; 7-cyano-7-deazaguanine biosynthesis. Functionally, catalyzes the ATP-dependent conversion of 7-carboxy-7-deazaguanine (CDG) to 7-cyano-7-deazaguanine (preQ(0)). This chain is 7-cyano-7-deazaguanine synthase, found in Paramagnetospirillum magneticum (strain ATCC 700264 / AMB-1) (Magnetospirillum magneticum).